An 869-amino-acid polypeptide reads, in one-letter code: DNA mismatch repair protein MutS (869 aa).

624 to 631 (GPNMGGKS) serves as a coordination point for ATP.

This sequence belongs to the DNA mismatch repair MutS family.

In terms of biological role, this protein is involved in the repair of mismatches in DNA. It is possible that it carries out the mismatch recognition step. This protein has a weak ATPase activity. The chain is DNA mismatch repair protein MutS from Solibacter usitatus (strain Ellin6076).